Consider the following 182-residue polypeptide: Isopentenyl-diphosphate Delta-isomerase (182 aa).

Residues His25 and His32 each coordinate Mn(2+). Positions 30 to 164 (LLHLAFSSWL…PWAFSPWMVM (135 aa)) constitute a Nudix hydrolase domain. Cys67 is an active-site residue. His69 lines the Mn(2+) pocket. Residue Glu87 coordinates Mg(2+). Residues Glu114 and Glu116 each coordinate Mn(2+). Glu116 is a catalytic residue.

Belongs to the IPP isomerase type 1 family. In terms of assembly, homodimer. Requires Mg(2+) as cofactor. Mn(2+) is required as a cofactor.

The protein resides in the cytoplasm. It catalyses the reaction isopentenyl diphosphate = dimethylallyl diphosphate. Its pathway is isoprenoid biosynthesis; dimethylallyl diphosphate biosynthesis; dimethylallyl diphosphate from isopentenyl diphosphate: step 1/1. Catalyzes the 1,3-allylic rearrangement of the homoallylic substrate isopentenyl (IPP) to its highly electrophilic allylic isomer, dimethylallyl diphosphate (DMAPP). This chain is Isopentenyl-diphosphate Delta-isomerase, found in Escherichia coli (strain SMS-3-5 / SECEC).